The sequence spans 593 residues: MLO-like protein 8 (593 aa).

Over 1 to 46 (MGIIDGSLLRRLICLCLWCLLGGGVTVVTAEDEKKVVHKQLNQTPT) the chain is Extracellular. A helical membrane pass occupies residues 47–67 (WAVAAVCTFFIVVSVLLEKLL). Topologically, residues 68–92 (HKVGKVLWDRHKTALLDALEKIKAE) are cytoplasmic. A helical membrane pass occupies residues 93–113 (LMVLGFISLLLTFGQTYILDI). Topologically, residues 114-181 (CIPSHVARTM…ISAEALHQLH (68 aa)) are extracellular. Residues 182-202 (ILIFFLAIFHVLYSFLTMMLG) form a helical membrane-spanning segment. Over 203-304 (RLKIRGWKHW…IKRSLEDDFK (102 aa)) the chain is Cytoplasmic. Residues 305-325 (VVVGVSPVLWGSFVLFLLLNI) form a helical membrane-spanning segment. Position 326 (Asp-326) is a topological domain, extracellular. Residues 327–347 (GFKMMFIGTAIPVIIILAVGT) form a helical membrane-spanning segment. Over 348-393 (KLQAIMTRMALGITDRHAVVQGMPLVQGNDEYFWFGRPHLILHLMH) the chain is Cytoplasmic. A helical transmembrane segment spans residues 394–414 (FALFQNAFQITYFFWIWYSFG). Over 415-430 (SDSCYHPNFKIALVKV) the chain is Extracellular. A helical membrane pass occupies residues 431–451 (AIALGVLCLCSYITLPLYALV). At 452 to 593 (TQMGSRMKKS…APSNESSQDR (142 aa)) the chain is on the cytoplasmic side. The segment at 465–486 (EQTSKALKKWRMAVKKKKGVKA) is calmodulin-binding. Positions 481-593 (KKGVKATTKR…APSNESSQDR (113 aa)) are disordered. Residues 489 to 512 (KRLGGDGSASPTASTVRSTSSVRS) are compositionally biased toward low complexity. The segment covering 528-539 (LDPETSDLDTDN) has biased composition (acidic residues). Residues 567–579 (TSRDTETDSKEFS) show a composition bias toward basic and acidic residues.

The protein belongs to the MLO family.

Its subcellular location is the membrane. In terms of biological role, may be involved in modulation of pathogen defense and leaf cell death. Activity seems to be regulated by Ca(2+)-dependent calmodulin binding and seems not to require heterotrimeric G proteins. This is MLO-like protein 8 (MLO8) from Arabidopsis thaliana (Mouse-ear cress).